The following is a 593-amino-acid chain: Brain-enriched guanylate kinase-associated protein (593 aa).

Met1 bears the N-acetylmethionine mark. At Tyr137 the chain carries Phosphotyrosine. 6 positions are modified to phosphoserine: Ser200, Ser229, Ser246, Ser265, Ser346, and Ser373. At Arg381 the chain carries Asymmetric dimethylarginine. 9 positions are modified to phosphoserine: Ser455, Ser465, Ser475, Ser477, Ser500, Ser502, Ser506, Ser553, and Ser563. A disordered region spans residues Leu499–Asn593.

As to quaternary structure, interacts with DLG4 and DLGAP1 and forms a ternary complex.

It localises to the cytoplasm. Its subcellular location is the membrane. May sustain the structure of the postsynaptic density (PSD). This is Brain-enriched guanylate kinase-associated protein (BEGAIN) from Homo sapiens (Human).